Reading from the N-terminus, the 534-residue chain is Acyl-CoA-binding domain-containing protein 5 (534 aa).

Positions 41 to 130 constitute an ACB domain; sequence HETRFEAAVK…MKKIIETMPM (90 aa). An an acyl-CoA-binding site is contributed by 52 to 61; it reads IQSLPKNGSF. P63 is modified (phosphothreonine). An acyl-CoA is bound by residues 72-76, K98, and Y117; that span reads YSFYK. Phosphothreonine is present on residues L137 and E172. The segment at 181–225 is disordered; it reads TPNAKTVNGKAESSDSGAESEEEEAQEEVKGAEQSDNDKKMMKKS. A coiled-coil region spans residues 190–219; sequence KAESSDSGAESEEEEAQEEVKGAEQSDNDK. Phosphoserine occurs at positions 193, 194, 196, 200, 215, 279, and 313. A compositionally biased stretch (basic and acidic residues) spans 207–225; the sequence is EEVKGAEQSDNDKKMMKKS. The span at 376–385 shows a compositional bias: basic and acidic residues; the sequence is EVKHGGEDGR. The interval 376 to 442 is disordered; it reads EVKHGGEDGR…ERWGSDRGSR (67 aa). T400 carries the post-translational modification Phosphothreonine. S428 is modified (phosphoserine). Positions 431 to 441 are enriched in basic and acidic residues; sequence DGERWGSDRGS. Residues 447-476 are a coiled coil; sequence EQIALVLMRLQEDMQNVLQRLQKLETLTAL. K469 is modified (N6-acetyllysine). The helical transmembrane segment at 506–526 threads the bilayer; it reads GVLTFAIIWPFIAQWLVYLYY.

It belongs to the ATG37 family.

The protein localises to the peroxisome membrane. Functionally, acyl-CoA binding protein which acts as the peroxisome receptor for pexophagy but is dispensable for aggrephagy and nonselective autophagy. Binds medium- and long-chain acyl-CoA esters. In Homo sapiens (Human), this protein is Acyl-CoA-binding domain-containing protein 5 (ACBD5).